The following is a 357-amino-acid chain: 3-isopropylmalate dehydrogenase (357 aa).

Residues Arg-99, Arg-109, Arg-133, and Asp-223 each contribute to the substrate site. Residues Asp-223, Asp-247, and Asp-251 each contribute to the Mg(2+) site. 283–295 serves as a coordination point for NAD(+); the sequence is GSAPDIAGEQRAD.

Belongs to the isocitrate and isopropylmalate dehydrogenases family. LeuB type 2 subfamily. Homodimer. It depends on Mg(2+) as a cofactor. Mn(2+) is required as a cofactor.

The protein localises to the cytoplasm. It carries out the reaction (2R,3S)-3-isopropylmalate + NAD(+) = 4-methyl-2-oxopentanoate + CO2 + NADH. It participates in amino-acid biosynthesis; L-leucine biosynthesis; L-leucine from 3-methyl-2-oxobutanoate: step 3/4. Functionally, catalyzes the oxidation of 3-carboxy-2-hydroxy-4-methylpentanoate (3-isopropylmalate) to 3-carboxy-4-methyl-2-oxopentanoate. The product decarboxylates to 4-methyl-2 oxopentanoate. This is 3-isopropylmalate dehydrogenase from Leifsonia xyli subsp. xyli (strain CTCB07).